Reading from the N-terminus, the 311-residue chain is LOB domain-containing protein 10 (311 aa).

Residues 4-105 (TPCAACKLLR…QDLLTAKEEL (102 aa)) form the LOB domain. The segment covering 264–277 (LQEGQEQTEEGQFL) has biased composition (low complexity). Residues 264-311 (LQEGQEQTEEGQFLMQPMGQENLHDEEEEEELEPPVKWRMSENKEASF) form a disordered region. Acidic residues predominate over residues 287–296 (HDEEEEEELE). A compositionally biased stretch (basic and acidic residues) spans 297–311 (PPVKWRMSENKEASF).

Belongs to the LOB domain-containing protein family.

This is LOB domain-containing protein 10 (LBD10) from Arabidopsis thaliana (Mouse-ear cress).